The primary structure comprises 855 residues: E3 ubiquitin-protein ligase TRIM71 (855 aa).

At Ala2 the chain carries N-acetylalanine. The RING-type zinc-finger motif lies at 12–94 (CLLCKEMCGS…ALKLRCPVCD (83 aa)). Low complexity predominate over residues 26–42 (SSSSSASSSSSQTSTSS). 2 disordered regions span residues 26 to 48 (SSSS…GGGP) and 126 to 177 (ADEP…SPGS). Residues 135-145 (RAGGGPGGAGG) show a composition bias toward gly residues. Positions 147–157 (SNHRHHAHHPA) are enriched in basic residues. A B box-type 1; atypical zinc finger spans residues 181 to 228 (RRPHGCSSCDEGNAASSRCLDCQEHLCDNCVRAHQRVRLTKDHYIERG). The segment at 260 to 301 (ERLGFCQHHDDEVLHLYCDTCSVPICRECTLGRHGGHSFAYL) adopts a B box-type 2 zinc-finger fold. Residues Cys265, His268, Cys288, and His293 each contribute to the Zn(2+) site. Positions 378-414 (QVKAKSLYLQVEKLRQNLNKLESTISAVQQVLEEGRA) form a coiled coil. The Filamin repeat unit spans residues 466-567 (SSGAFAPLTK…IENSPFKVVV (102 aa)). NHL repeat units lie at residues 580 to 623 (VLSF…FKPC), 627 to 670 (HHKF…FTFE), 674 to 717 (LLKF…FGPD), 721 to 764 (LNKY…IHPD), 768 to 811 (ARFL…FEAN), and 815 to 855 (LCKF…ILIF).

The protein belongs to the TRIM/RBCC family. As to quaternary structure, interacts (via NHL repeats) with AGO2; the interaction increases in presence of RNA. Interacts with HSP90AA1. Interacts (via NHL repeats) with MOV10, PABPC1, PUM1, PUM2, STAU2, XRN1 and XRN2 in an RNA-dependent manner. Interacts with SHCBP1; leading to enhance its stability. Post-translationally, autoubiquitinated.

It localises to the cytoplasm. It is found in the P-body. The enzyme catalyses S-ubiquitinyl-[E2 ubiquitin-conjugating enzyme]-L-cysteine + [acceptor protein]-L-lysine = [E2 ubiquitin-conjugating enzyme]-L-cysteine + N(6)-ubiquitinyl-[acceptor protein]-L-lysine.. The protein operates within protein modification; protein ubiquitination. Functionally, E3 ubiquitin-protein ligase that cooperates with the microRNAs (miRNAs) machinery and promotes embryonic stem cells proliferation and maintenance. Binds to miRNAs and associates with AGO2, participating in post-transcriptional repression of transcripts such as CDKN1A. In addition, participates in post-transcriptional mRNA repression in a miRNA independent mechanism. Facilitates the G1-S transition to promote rapid embryonic stem cell self-renewal by repressing CDKN1A expression. Required to maintain proliferation and prevent premature differentiation of neural progenitor cells during early neural development: positively regulates FGF signaling by controlling the stability of SHCBP1. Specific regulator of miRNA biogenesis. Binds to miRNA MIR29A hairpin and postranscriptionally modulates MIR29A levels, which indirectly regulates TET proteins expression. The polypeptide is E3 ubiquitin-protein ligase TRIM71 (Trim71) (Rattus norvegicus (Rat)).